A 364-amino-acid polypeptide reads, in one-letter code: GTPase Obg (364 aa).

An Obg domain is found at 1-159 (MKFIDEARIE…RNLRLELKVL (159 aa)). Positions 128-147 (IHFKSSTNRAPRQKTDGKAG) are disordered. Positions 160 to 334 (ADVGLLGMPN…LVHAIQEYLD (175 aa)) constitute an OBG-type G domain. GTP contacts are provided by residues 166 to 173 (GMPNAGKS), 191 to 195 (FTTLH), 213 to 216 (DIPG), 284 to 287 (NKLD), and 315 to 317 (SAL). Mg(2+) is bound by residues S173 and T193. The disordered stretch occupies residues 340–364 (EDAAAAAPDQRLDPTLHNVDHDDQA). A compositionally biased stretch (basic and acidic residues) spans 349 to 364 (QRLDPTLHNVDHDDQA).

The protein belongs to the TRAFAC class OBG-HflX-like GTPase superfamily. OBG GTPase family. As to quaternary structure, monomer. Requires Mg(2+) as cofactor.

The protein resides in the cytoplasm. Its function is as follows. An essential GTPase which binds GTP, GDP and possibly (p)ppGpp with moderate affinity, with high nucleotide exchange rates and a fairly low GTP hydrolysis rate. Plays a role in control of the cell cycle, stress response, ribosome biogenesis and in those bacteria that undergo differentiation, in morphogenesis control. This is GTPase Obg from Ralstonia pickettii (strain 12J).